Reading from the N-terminus, the 85-residue chain is Toxin BmKITc (85 aa).

A signal peptide spans 1-21 (MKLFLLLVIFASMLNDGLVNA). In terms of domain architecture, LCN-type CS-alpha/beta spans 22–82 (DGYIRGSDGC…KWKYESNTCG (61 aa)). 4 disulfides stabilise this stretch: C31-C81, C35-C56, C42-C63, and C46-C65.

It belongs to the long (4 C-C) scorpion toxin superfamily. Sodium channel inhibitor family. Beta subfamily. In terms of tissue distribution, expressed by the venom gland.

The protein localises to the secreted. Functionally, depressant insect beta-toxins cause a transient contraction paralysis followed by a slow flaccid paralysis. They bind voltage-independently at site-4 of sodium channels (Nav) and shift the voltage of activation toward more negative potentials thereby affecting sodium channel activation and promoting spontaneous and repetitive firing. This chain is Toxin BmKITc, found in Olivierus martensii (Manchurian scorpion).